Here is a 282-residue protein sequence, read N- to C-terminus: Biotin synthase (282 aa).

Residues 1 to 228 (MQEIFLCSIS…NARLMVAGGR (228 aa)) enclose the Radical SAM core domain. 3 residues coordinate [4Fe-4S] cluster: Cys-17, Cys-21, and Cys-24. [2Fe-2S] cluster-binding residues include Cys-61, Cys-96, Cys-154, and Arg-221.

This sequence belongs to the radical SAM superfamily. Biotin synthase family. Homodimer. [4Fe-4S] cluster serves as cofactor. [2Fe-2S] cluster is required as a cofactor.

It carries out the reaction (4R,5S)-dethiobiotin + (sulfur carrier)-SH + 2 reduced [2Fe-2S]-[ferredoxin] + 2 S-adenosyl-L-methionine = (sulfur carrier)-H + biotin + 2 5'-deoxyadenosine + 2 L-methionine + 2 oxidized [2Fe-2S]-[ferredoxin]. It functions in the pathway cofactor biosynthesis; biotin biosynthesis; biotin from 7,8-diaminononanoate: step 2/2. In terms of biological role, catalyzes the conversion of dethiobiotin (DTB) to biotin by the insertion of a sulfur atom into dethiobiotin via a radical-based mechanism. This chain is Biotin synthase, found in Helicobacter pylori (strain Shi470).